The chain runs to 185 residues: Ribose 1,5-bisphosphate phosphokinase PhnN (185 aa).

10–17 (GPSGSGKD) serves as a coordination point for ATP.

This sequence belongs to the ribose 1,5-bisphosphokinase family.

The enzyme catalyses alpha-D-ribose 1,5-bisphosphate + ATP = 5-phospho-alpha-D-ribose 1-diphosphate + ADP. The protein operates within metabolic intermediate biosynthesis; 5-phospho-alpha-D-ribose 1-diphosphate biosynthesis; 5-phospho-alpha-D-ribose 1-diphosphate from D-ribose 5-phosphate (route II): step 3/3. In terms of biological role, catalyzes the phosphorylation of ribose 1,5-bisphosphate to 5-phospho-D-ribosyl alpha-1-diphosphate (PRPP). The polypeptide is Ribose 1,5-bisphosphate phosphokinase PhnN (Escherichia coli O157:H7).